The following is a 734-amino-acid chain: Exonuclease 1 (734 aa).

An N-domain region spans residues 1 to 99 (MGIQGLLQFL…KARREKRQTN (99 aa)). The Mg(2+) site is built by aspartate 30, aspartate 78, glutamate 150, aspartate 152, aspartate 171, aspartate 173, and aspartate 225. The segment at 138-229 (RSEGVDYIVA…ILSGCDYLPS (92 aa)) is I-domain. Disordered stretches follow at residues 599-650 (EAEN…CQFT), 656-675 (AHQS…KVPG), and 685-716 (GLRT…NENV). The span at 604-620 (PSWQSSCIKSDTVSQID) shows a compositional bias: polar residues. The span at 621–641 (SNEKLLKKQDIEDTDSDEHAS) shows a compositional bias: basic and acidic residues. The span at 700-715 (GLTNRSNTKATRNNEN) shows a compositional bias: polar residues.

It belongs to the XPG/RAD2 endonuclease family. EXO1 subfamily. It depends on Mg(2+) as a cofactor.

The protein resides in the nucleus. 5'-&gt;3' double-stranded DNA exonuclease which may also contain a cryptic 3'-&gt;5' double-stranded DNA exonuclease activity. Also exhibits endonuclease activity against 5'-overhanging flap structures similar to those generated by displacement synthesis when DNA polymerase encounters the 5'-end of a downstream Okazaki fragment. Required for DNA mismatch repair (MMR). The protein is Exonuclease 1 (exo1) of Xenopus laevis (African clawed frog).